The chain runs to 137 residues: Large ribosomal subunit protein uL16c (137 aa).

Belongs to the universal ribosomal protein uL16 family. As to quaternary structure, part of the 50S ribosomal subunit.

The protein resides in the plastid. The sequence is that of Large ribosomal subunit protein uL16c from Aneura mirabilis (Parasitic liverwort).